The chain runs to 165 residues: UBA-like domain-containing protein 2-B (165 aa).

A disordered region spans residues 119-165; sequence QQPVWLPPASPTAHLHHHHHHPQPVWPPNSQPTGGPQKAMAAMDGQR.

It belongs to the UBALD family.

The sequence is that of UBA-like domain-containing protein 2-B (ubald2-b) from Xenopus laevis (African clawed frog).